A 241-amino-acid chain; its full sequence is GTP cyclohydrolase 1 (241 aa).

The propeptide occupies 1–11 (MEKPRGVRCTN). The disordered stretch occupies residues 1–58 (MEKPRGVRCTNGFPERELPRPGASRPAEKSRPPEAKGAQPADAWKAGRPRSEEDNELN). Residues S51 and S72 each carry the phosphoserine modification. Residues C132, H135, and C203 each coordinate Zn(2+).

It belongs to the GTP cyclohydrolase I family. Toroid-shaped homodecamer, composed of two pentamers of five dimers. Interacts with AHSA1 and GCHFR/GFRP. In terms of processing, phosphorylated.

Its subcellular location is the cytoplasm. The protein resides in the nucleus. It carries out the reaction GTP + H2O = 7,8-dihydroneopterin 3'-triphosphate + formate + H(+). It functions in the pathway cofactor biosynthesis; 7,8-dihydroneopterin triphosphate biosynthesis; 7,8-dihydroneopterin triphosphate from GTP: step 1/1. GTP shows a positive allosteric effect, and tetrahydrobiopterin inhibits the enzyme activity. Zinc is required for catalytic activity. Inhibited by Mg(2+). In terms of biological role, may positively regulate nitric oxide synthesis in endothelial cells. May be involved in dopamine synthesis. May modify pain sensitivity and persistence. This is GTP cyclohydrolase 1 (Gch1) from Rattus norvegicus (Rat).